We begin with the raw amino-acid sequence, 853 residues long: DNA mismatch repair protein MutS (853 aa).

An ATP-binding site is contributed by 613 to 620 (GPNMGGKS).

This sequence belongs to the DNA mismatch repair MutS family.

Functionally, this protein is involved in the repair of mismatches in DNA. It is possible that it carries out the mismatch recognition step. This protein has a weak ATPase activity. This is DNA mismatch repair protein MutS from Vibrio vulnificus (strain YJ016).